A 231-amino-acid polypeptide reads, in one-letter code: GTP-binding protein RHO3 (231 aa).

A GTP-binding site is contributed by 23–30; that stretch reads GDGACGKT. The short motif at 45 to 53 is the Effector region element; that stretch reads YEPTVFENY. GTP contacts are provided by residues 70–74 and 128–131; these read DTAGQ and LKCD. Over residues 139–150 the composition is skewed to polar residues; sequence SNAITPNNIQQD. The segment at 139–165 is disordered; that stretch reads SNAITPNNIQQDNSVSNDNGNNINSTS. Residues 151–165 show a composition bias toward low complexity; sequence NSVSNDNGNNINSTS. Position 228 is a cysteine methyl ester (cysteine 228). Residue cysteine 228 is the site of S-farnesyl cysteine attachment. Positions 229-231 are cleaved as a propeptide — removed in mature form; sequence TIM.

It belongs to the small GTPase superfamily. Rho family. As to quaternary structure, interacts with TOS7.

The protein resides in the cell membrane. With respect to regulation, activity is positively regulated by the GTPase activating protein (GAP) RGD1. Plays an important role in cell growth. Required to keep the uninucleated state. Modulates morphogenesis during bud growth via directing organization of the actin cytoskeleton and the position of the secretory machinery for exocytosis. The polypeptide is GTP-binding protein RHO3 (Saccharomyces cerevisiae (strain ATCC 204508 / S288c) (Baker's yeast)).